Reading from the N-terminus, the 371-residue chain is Putative transport protein YtvI (371 aa).

9 consecutive transmembrane segments (helical) span residues 6-26, 30-50, 65-85, 168-188, 225-245, 256-276, 283-303, 312-332, and 334-354; these read ITIF…IAAA, FPLT…HPVV, VLGV…ILVA, FFAL…ATFF, GFIK…FIGL, IAFL…SVFV, SITG…VVLI, ILSK…FAGF, and LFGF…QAFI.

This sequence belongs to the autoinducer-2 exporter (AI-2E) (TC 2.A.86) family.

The protein localises to the cell membrane. The chain is Putative transport protein YtvI (ytvI) from Bacillus subtilis (strain 168).